Reading from the N-terminus, the 592-residue chain is Bifunctional purine biosynthesis protein ATIC (592 aa).

Residue methionine 1 is modified to N-acetylmethionine. In terms of domain architecture, MGS-like spans 2–146 (APGQLALFSV…KNHARVTVVC (145 aa)). Positions 2–198 (APGQLALFSV…ISDYFRKQYS (197 aa)) are IMP cyclohydrolase. Residues 12–14 (SDK), 34–37 (SGGT), 64–67 (RVKT), 101–102 (CN), and 125–126 (DI) contribute to the IMP site. The active-site Proton donor/acceptor; for FAICAR cyclization activity is lysine 137. Lysine 199 bears the N6-acetyllysine mark. The segment at 199-592 (KGVSQMPLRY…AHTNLRLFHH (394 aa)) is AICAR formyltransferase. Residues 207-208 (RY), histidine 267, glycine 316, aspartate 339, asparagine 431, and arginine 451 contribute to the 5-amino-1-(5-phospho-beta-D-ribosyl)imidazole-4-carboxamide site. Histidine 267 serves as the catalytic Proton acceptor; for AICAR formyltransferase activity. Isoleucine 452 contributes to the (6R)-10-formyltetrahydrofolate binding site. Phenylalanine 541 contributes to the 5-amino-1-(5-phospho-beta-D-ribosyl)imidazole-4-carboxamide binding site. (6R)-10-formyltetrahydrofolate-binding positions include aspartate 546 and 565-566 (SA). Arginine 588 serves as a coordination point for 5-amino-1-(5-phospho-beta-D-ribosyl)imidazole-4-carboxamide.

This sequence belongs to the PurH family. In terms of assembly, homodimer. Associates with internalized INSR complexes on Golgi/endosomal membranes. Interacts with INSR; ATIC together with PRKAA2/AMPK2 and HACD3/PTPLAD1 is proposed to be part of a signaling network regulating INSR autophosphorylation and endocytosis. Present in the heart, brain, placenta, lung, liver, skeletal muscle, kidney, pancreas.

The protein localises to the cytoplasm. The protein resides in the cytosol. It catalyses the reaction (6R)-10-formyltetrahydrofolate + 5-amino-1-(5-phospho-beta-D-ribosyl)imidazole-4-carboxamide = 5-formamido-1-(5-phospho-D-ribosyl)imidazole-4-carboxamide + (6S)-5,6,7,8-tetrahydrofolate. It carries out the reaction 10-formyldihydrofolate + 5-amino-1-(5-phospho-beta-D-ribosyl)imidazole-4-carboxamide = 5-formamido-1-(5-phospho-D-ribosyl)imidazole-4-carboxamide + 7,8-dihydrofolate. The catalysed reaction is IMP + H2O = 5-formamido-1-(5-phospho-D-ribosyl)imidazole-4-carboxamide. The enzyme catalyses 5-amino-1-(5-phospho-D-ribosyl)imidazole-4-thiocarboxamide + 10-formyldihydrofolate = 6-thio-IMP + 7,8-dihydrofolate + H2O. It participates in purine metabolism; IMP biosynthesis via de novo pathway; 5-formamido-1-(5-phospho-D-ribosyl)imidazole-4-carboxamide from 5-amino-1-(5-phospho-D-ribosyl)imidazole-4-carboxamide (10-formyl THF route): step 1/1. Its pathway is purine metabolism; IMP biosynthesis via de novo pathway; IMP from 5-formamido-1-(5-phospho-D-ribosyl)imidazole-4-carboxamide: step 1/1. With respect to regulation, AMP and XMP inhibit AICAR formyltransferase activity. AICAR formyltransferase activity is inhibited by N-(6-fluoro-1-oxo-1,2-dihydroisoquinolin-7-yl)-5- [(3R)-3-hydroxypyrrolidin-1-yl]thiophene-2-sulfonamide (LSN 3213128), which acts as a tumor suppression in cancer cell lines. Bifunctional enzyme that catalyzes the last two steps of purine biosynthesis. Acts as a transformylase that incorporates a formyl group to the AMP analog AICAR (5-amino-1-(5-phospho-beta-D-ribosyl)imidazole-4-carboxamide) to produce the intermediate formyl-AICAR (FAICAR). Can use both 10-formyldihydrofolate and 10-formyltetrahydrofolate as the formyl donor in this reaction. Also catalyzes the cyclization of FAICAR to inosine monophosphate (IMP). Is able to convert thio-AICAR to 6-mercaptopurine ribonucleotide, an inhibitor of purine biosynthesis used in the treatment of human leukemias. Promotes insulin receptor/INSR autophosphorylation and is involved in INSR internalization. This is Bifunctional purine biosynthesis protein ATIC from Homo sapiens (Human).